Consider the following 532-residue polypeptide: Muscarinic acetylcholine receptor M5 (532 aa).

Over 1–29 the chain is Extracellular; the sequence is MEGDSYGNATTINGTPVNHQPLERHRLWE. A glycan (N-linked (GlcNAc...) asparagine) is linked at asparagine 8. A helical membrane pass occupies residues 30–53; sequence VITIAAVTAVVSLITIVGNVLVMI. Residues 54–66 lie on the Cytoplasmic side of the membrane; the sequence is SFKVNSQLKTVNN. Residues 67 to 87 form a helical membrane-spanning segment; the sequence is YYLLSLACADLIIGIFSMNLY. The Extracellular portion of the chain corresponds to 88-104; it reads TTYILMGRWALGSLACD. A helical membrane pass occupies residues 105–126; that stretch reads LWLALDYVASNASVMNLLVISF. The Cytoplasmic portion of the chain corresponds to 127–146; sequence DRYFSITRPLTYRAKRTPKR. A helical membrane pass occupies residues 147–169; the sequence is AGIMIGLAWLISFILWAPAILCW. The Extracellular portion of the chain corresponds to 170 to 191; it reads QYLVGKRTVPPDECQIQFLSEP. The helical transmembrane segment at 192 to 214 threads the bilayer; that stretch reads TITFGTAIAAFYIPVSVMTILYC. The Cytoplasmic portion of the chain corresponds to 215 to 443; the sequence is RIYRETEKRT…LVKERKAAQT (229 aa). The tract at residues 263 to 294 is disordered; that stretch reads QRERNQASRSSSHRSTSITGKPSQATGPSTNW. The span at 270–279 shows a compositional bias: low complexity; that stretch reads SRSSSHRSTS. Over residues 280 to 294 the composition is skewed to polar residues; that stretch reads ITGKPSQATGPSTNW. The chain crosses the membrane as a helical span at residues 444 to 464; sequence LSAILLAFIITWTPYNIMVLV. Topologically, residues 465-478 are extracellular; sequence STFCDKCVPVALWH. The helical transmembrane segment at 479-498 threads the bilayer; that stretch reads LGYWLCYVNSTVNPICYALC. The Cytoplasmic portion of the chain corresponds to 499–532; the sequence is NRTFRKTFKMLLLCQWKKKKVEEKLYWQGNSKLP. Phosphothreonine occurs at positions 501 and 505.

The protein belongs to the G-protein coupled receptor 1 family. Muscarinic acetylcholine receptor subfamily. CHRM5 sub-subfamily.

The protein localises to the cell membrane. It is found in the postsynaptic cell membrane. In terms of biological role, the muscarinic acetylcholine receptor mediates various cellular responses, including inhibition of adenylate cyclase, breakdown of phosphoinositides and modulation of potassium channels through the action of G proteins. Primary transducing effect is Pi turnover. The protein is Muscarinic acetylcholine receptor M5 (CHRM5) of Saimiri boliviensis boliviensis (Bolivian squirrel monkey).